The primary structure comprises 224 residues: Type VII secretion system protein EsaE (224 aa).

In terms of assembly, interacts with EssD.

In terms of biological role, component of the type VII secretion system (Ess). Plays a role in Esx protein secretion. Plays an essential role in the processing and secretion of EssD. The polypeptide is Type VII secretion system protein EsaE (Staphylococcus aureus (strain USA300)).